The sequence spans 267 residues: Tryptophan synthase alpha chain (267 aa).

Active-site proton acceptor residues include Glu-47 and Asp-58.

This sequence belongs to the TrpA family. Tetramer of two alpha and two beta chains.

The enzyme catalyses (1S,2R)-1-C-(indol-3-yl)glycerol 3-phosphate + L-serine = D-glyceraldehyde 3-phosphate + L-tryptophan + H2O. The protein operates within amino-acid biosynthesis; L-tryptophan biosynthesis; L-tryptophan from chorismate: step 5/5. Its function is as follows. The alpha subunit is responsible for the aldol cleavage of indoleglycerol phosphate to indole and glyceraldehyde 3-phosphate. The chain is Tryptophan synthase alpha chain from Chlorobaculum parvum (strain DSM 263 / NCIMB 8327) (Chlorobium vibrioforme subsp. thiosulfatophilum).